Reading from the N-terminus, the 255-residue chain is Cytosolic Fe-S cluster assembly factor Nubp2 homolog (255 aa).

14 to 21 (GKGGVGKS) serves as a coordination point for ATP. [4Fe-4S] cluster-binding residues include C185 and C188.

The protein belongs to the Mrp/NBP35 ATP-binding proteins family. NUBP2/CFD1 subfamily. Heterotetramer of 2 Nubp1 and 2 Nubp2 chains. It depends on [4Fe-4S] cluster as a cofactor.

It is found in the cytoplasm. Functionally, component of the cytosolic iron-sulfur (Fe/S) protein assembly (CIA) machinery. Required for maturation of extramitochondrial Fe-S proteins. The Nubp1-Nubp2 heterotetramer forms a Fe-S scaffold complex, mediating the de novo assembly of an Fe-S cluster and its transfer to target apoproteins. This is Cytosolic Fe-S cluster assembly factor Nubp2 homolog from Drosophila persimilis (Fruit fly).